We begin with the raw amino-acid sequence, 1067 residues long: Carbamoyl phosphate synthase large chain (1067 aa).

The tract at residues 1 to 401 (MPLNKDIKKV…AFLKGIRSLE (401 aa)) is carboxyphosphate synthetic domain. Residues arginine 129, arginine 169, glycine 175, glycine 176, lysine 208, valine 210, glutamate 215, glycine 241, isoleucine 242, histidine 243, glutamine 284, and glutamate 298 each coordinate ATP. One can recognise an ATP-grasp 1 domain in the interval 133-327 (RDMMNRINQP…IAKVAAKIAL (195 aa)). Mg(2+)-binding residues include glutamine 284, glutamate 298, and asparagine 300. The Mn(2+) site is built by glutamine 284, glutamate 298, and asparagine 300. Residues 402-549 (IGKYSLEHKK…YSTYEQYDEV (148 aa)) are oligomerization domain. The segment at 550-932 (VVSDNKKVVV…ALYKGFVGAS (383 aa)) is carbamoyl phosphate synthetic domain. The ATP-grasp 2 domain maps to 674–864 (DDLLERLNIA…IVDIATRIML (191 aa)). Arginine 710, lysine 749, leucine 751, glutamate 755, glycine 780, valine 781, histidine 782, serine 783, glutamine 823, and glutamate 835 together coordinate ATP. Mg(2+) contacts are provided by glutamine 823, glutamate 835, and asparagine 837. Residues glutamine 823, glutamate 835, and asparagine 837 each coordinate Mn(2+). Residues 933 to 1067 (MYTGDKGKTI…NRELEVFNLI (135 aa)) form the MGS-like domain. The segment at 933-1067 (MYTGDKGKTI…NRELEVFNLI (135 aa)) is allosteric domain.

The protein belongs to the CarB family. In terms of assembly, composed of two chains; the small (or glutamine) chain promotes the hydrolysis of glutamine to ammonia, which is used by the large (or ammonia) chain to synthesize carbamoyl phosphate. Tetramer of heterodimers (alpha,beta)4. It depends on Mg(2+) as a cofactor. Mn(2+) is required as a cofactor.

The enzyme catalyses hydrogencarbonate + L-glutamine + 2 ATP + H2O = carbamoyl phosphate + L-glutamate + 2 ADP + phosphate + 2 H(+). It carries out the reaction hydrogencarbonate + NH4(+) + 2 ATP = carbamoyl phosphate + 2 ADP + phosphate + 2 H(+). The protein operates within amino-acid biosynthesis; L-arginine biosynthesis; carbamoyl phosphate from bicarbonate: step 1/1. It participates in pyrimidine metabolism; UMP biosynthesis via de novo pathway; (S)-dihydroorotate from bicarbonate: step 1/3. Large subunit of the glutamine-dependent carbamoyl phosphate synthetase (CPSase). CPSase catalyzes the formation of carbamoyl phosphate from the ammonia moiety of glutamine, carbonate, and phosphate donated by ATP, constituting the first step of 2 biosynthetic pathways, one leading to arginine and/or urea and the other to pyrimidine nucleotides. The large subunit (synthetase) binds the substrates ammonia (free or transferred from glutamine from the small subunit), hydrogencarbonate and ATP and carries out an ATP-coupled ligase reaction, activating hydrogencarbonate by forming carboxy phosphate which reacts with ammonia to form carbamoyl phosphate. The polypeptide is Carbamoyl phosphate synthase large chain (Clostridium perfringens (strain 13 / Type A)).